The sequence spans 141 residues: uncharacterized protein (141 aa).

3 helical membrane passes run 32 to 52 (LIVLIFSILIAISAYISTSII), 69 to 89 (IIALISTFIGGIVAWLIIAGF), and 109 to 129 (FTGYGFLPNIVGALITIPIAY).

The protein resides in the cell membrane. This is an uncharacterized protein from Methanocaldococcus jannaschii (strain ATCC 43067 / DSM 2661 / JAL-1 / JCM 10045 / NBRC 100440) (Methanococcus jannaschii).